Reading from the N-terminus, the 353-residue chain is UDP-N-acetylglucosamine--N-acetylmuramyl-(pentapeptide) pyrophosphoryl-undecaprenol N-acetylglucosamine transferase (353 aa).

UDP-N-acetyl-alpha-D-glucosamine contacts are provided by residues asparagine 123, arginine 161, serine 189, isoleucine 243, 262–267 (ALTVSE), and glutamine 287.

This sequence belongs to the glycosyltransferase 28 family. MurG subfamily.

The protein localises to the cell membrane. The catalysed reaction is di-trans,octa-cis-undecaprenyl diphospho-N-acetyl-alpha-D-muramoyl-L-alanyl-D-glutamyl-meso-2,6-diaminopimeloyl-D-alanyl-D-alanine + UDP-N-acetyl-alpha-D-glucosamine = di-trans,octa-cis-undecaprenyl diphospho-[N-acetyl-alpha-D-glucosaminyl-(1-&gt;4)]-N-acetyl-alpha-D-muramoyl-L-alanyl-D-glutamyl-meso-2,6-diaminopimeloyl-D-alanyl-D-alanine + UDP + H(+). The protein operates within cell wall biogenesis; peptidoglycan biosynthesis. Its function is as follows. Cell wall formation. Catalyzes the transfer of a GlcNAc subunit on undecaprenyl-pyrophosphoryl-MurNAc-pentapeptide (lipid intermediate I) to form undecaprenyl-pyrophosphoryl-MurNAc-(pentapeptide)GlcNAc (lipid intermediate II). This Buchnera aphidicola subsp. Baizongia pistaciae (strain Bp) protein is UDP-N-acetylglucosamine--N-acetylmuramyl-(pentapeptide) pyrophosphoryl-undecaprenol N-acetylglucosamine transferase.